The following is a 110-amino-acid chain: Large ribosomal subunit protein uL24 (110 aa).

Belongs to the universal ribosomal protein uL24 family. In terms of assembly, part of the 50S ribosomal subunit.

In terms of biological role, one of two assembly initiator proteins, it binds directly to the 5'-end of the 23S rRNA, where it nucleates assembly of the 50S subunit. One of the proteins that surrounds the polypeptide exit tunnel on the outside of the subunit. The polypeptide is Large ribosomal subunit protein uL24 (Roseiflexus sp. (strain RS-1)).